Here is a 425-residue protein sequence, read N- to C-terminus: Serine--tRNA ligase (425 aa).

Residue 226-228 (TSE) coordinates L-serine. Residues 257 to 259 (RRE) and valine 273 contribute to the ATP site. Residue glutamate 280 participates in L-serine binding. 344-347 (ELTS) is a binding site for ATP. Threonine 382 provides a ligand contact to L-serine.

The protein belongs to the class-II aminoacyl-tRNA synthetase family. Type-1 seryl-tRNA synthetase subfamily. Homodimer. The tRNA molecule binds across the dimer.

The protein resides in the cytoplasm. It catalyses the reaction tRNA(Ser) + L-serine + ATP = L-seryl-tRNA(Ser) + AMP + diphosphate + H(+). It carries out the reaction tRNA(Sec) + L-serine + ATP = L-seryl-tRNA(Sec) + AMP + diphosphate + H(+). The protein operates within aminoacyl-tRNA biosynthesis; selenocysteinyl-tRNA(Sec) biosynthesis; L-seryl-tRNA(Sec) from L-serine and tRNA(Sec): step 1/1. Catalyzes the attachment of serine to tRNA(Ser). Is also able to aminoacylate tRNA(Sec) with serine, to form the misacylated tRNA L-seryl-tRNA(Sec), which will be further converted into selenocysteinyl-tRNA(Sec). This Mycobacterium avium (strain 104) protein is Serine--tRNA ligase.